The following is a 284-amino-acid chain: MKVECASNIGFCFGVRRAINILEKTASERGGVETLGALVHNQQVLNRLSGMGVRVVKNIDDISGRTVAISSHGVGPAVLAELKSKGLEIVDTTCPFVKRAQVAAKRFHDAGFFTVIYGDVNHPEVKGILGWAGGNGLATLNPQGLDDIPDLSRYIGVLSQTTQIPTGFTSFVKNVIDQALVKDAEIRIADTLCHDIRDRQAAALELAGRVDLMLVIGGHNSANTRHLLDLCKTVSNTHLIETASELQTDWLKGVSRIGITSGASTDETTISEVCSYLDRLSAGA.

C12 contacts [4Fe-4S] cluster. Residues H40 and H72 each contribute to the (2E)-4-hydroxy-3-methylbut-2-enyl diphosphate site. Residues H40 and H72 each coordinate dimethylallyl diphosphate. Residues H40 and H72 each coordinate isopentenyl diphosphate. Residue C94 coordinates [4Fe-4S] cluster. H122 contacts (2E)-4-hydroxy-3-methylbut-2-enyl diphosphate. Residue H122 participates in dimethylallyl diphosphate binding. Position 122 (H122) interacts with isopentenyl diphosphate. The Proton donor role is filled by E124. T161 provides a ligand contact to (2E)-4-hydroxy-3-methylbut-2-enyl diphosphate. Residue C193 participates in [4Fe-4S] cluster binding. Positions 221, 223, and 264 each coordinate (2E)-4-hydroxy-3-methylbut-2-enyl diphosphate. Dimethylallyl diphosphate-binding residues include S221, N223, and S264. Isopentenyl diphosphate is bound by residues S221, N223, and S264.

This sequence belongs to the IspH family. It depends on [4Fe-4S] cluster as a cofactor.

It catalyses the reaction isopentenyl diphosphate + 2 oxidized [2Fe-2S]-[ferredoxin] + H2O = (2E)-4-hydroxy-3-methylbut-2-enyl diphosphate + 2 reduced [2Fe-2S]-[ferredoxin] + 2 H(+). The catalysed reaction is dimethylallyl diphosphate + 2 oxidized [2Fe-2S]-[ferredoxin] + H2O = (2E)-4-hydroxy-3-methylbut-2-enyl diphosphate + 2 reduced [2Fe-2S]-[ferredoxin] + 2 H(+). It functions in the pathway isoprenoid biosynthesis; dimethylallyl diphosphate biosynthesis; dimethylallyl diphosphate from (2E)-4-hydroxy-3-methylbutenyl diphosphate: step 1/1. It participates in isoprenoid biosynthesis; isopentenyl diphosphate biosynthesis via DXP pathway; isopentenyl diphosphate from 1-deoxy-D-xylulose 5-phosphate: step 6/6. Catalyzes the conversion of 1-hydroxy-2-methyl-2-(E)-butenyl 4-diphosphate (HMBPP) into a mixture of isopentenyl diphosphate (IPP) and dimethylallyl diphosphate (DMAPP). Acts in the terminal step of the DOXP/MEP pathway for isoprenoid precursor biosynthesis. This is 4-hydroxy-3-methylbut-2-enyl diphosphate reductase from Dehalococcoides mccartyi (strain CBDB1).